Consider the following 535-residue polypeptide: MFSPRKIPMNVRGISMANGPVLVVDFGAQYAQLIARRVREAGVYSELVPHSMPVDEILAKDPKAIILSGGPASVFEPGAPTIDTKVFESGVPVLGICYGFQVMAYELGGKVDKAALGEYGKTSATIDDAAGILADSPAEQTTWMSHGVAVEQAPAGFEVLAHTEGAPVAAMADESRKLYGVQWHPEVKHSPLGQKLIENFLHRCAALPNDWDASSIIEDQVKKIREQVGDAEVICGLSGGVDSAVAAALVHKAIGDQLTCVFVDHGLLRKGEVEQVKHDFVAATGIRLITVDAADDFLDALAGVSEPERKRKIIGEKFIRTFEKAQRQVLEEAGARGKEVKFLVQGTLYPDVVESGGGDGAANIKSHHNVGGLPKDIKFQLIEPLRTLFKDEVRAIGTELGLPDEIVWRQPFPGPGLGIRIIGEITKERLDLLREADAIAREELSKAGLDRDIWQCPVVLLADVHSVGVQGDERTYGSPIVLRPVSSEDAMTADWSRVPYDVLATISTRITNECRQINRVVLDCTSKPPATIEWE.

Positions 20–210 (PVLVVDFGAQ…LHRCAALPND (191 aa)) constitute a Glutamine amidotransferase type-1 domain. Cysteine 97 serves as the catalytic Nucleophile. Residues histidine 184 and glutamate 186 contribute to the active site. The 199-residue stretch at 211–409 (WDASSIIEDQ…LGLPDEIVWR (199 aa)) folds into the GMPS ATP-PPase domain. 238–244 (SGGVDSA) contacts ATP.

In terms of assembly, homodimer.

The enzyme catalyses XMP + L-glutamine + ATP + H2O = GMP + L-glutamate + AMP + diphosphate + 2 H(+). It functions in the pathway purine metabolism; GMP biosynthesis; GMP from XMP (L-Gln route): step 1/1. Functionally, catalyzes the synthesis of GMP from XMP. In Bifidobacterium longum (strain NCC 2705), this protein is GMP synthase [glutamine-hydrolyzing].